Reading from the N-terminus, the 283-residue chain is Aldo-keto reductase MSMEG_2407/MSMEI_2346 (283 aa).

The active-site Proton donor is Y58. G196, L198, V200, I236, R238, S239, A240, R244, S247, N248, and R274 together coordinate NADPH.

It belongs to the aldo/keto reductase family. As to quaternary structure, monomer.

Its activity is regulated as follows. Inhibited by the antituberculosis drug isoniazid (INH). In terms of biological role, catalyzes the NADPH-dependent reduction of dicarbonyls. Exhibits narrow substrate specificity, with preferential activity against the dicarbonyl substrates phenylglyoxal and methylglyoxal. Exhibits weak activity with ethyl-2-methyl acetoacetate. Cannot use NADH. May play an important role in the detoxification of methylglyoxal. The protein is Aldo-keto reductase MSMEG_2407/MSMEI_2346 of Mycolicibacterium smegmatis (strain ATCC 700084 / mc(2)155) (Mycobacterium smegmatis).